Consider the following 666-residue polypeptide: MRKINLLDLETTNKIAAGEVIERPFSVVKELVENSIDAGAKNITIEIEDGGQKLIKIIDDGEGIYPIDIKNAFLPHATSKINSIEDIYKISTMGFRGEALASISSVSKTKLKSRVDSYNFGKEIYIEGGKIEYLKDTGCNVGTTIEVSDLFYNVPARLKFLKSARSDSSSISDIVNRFILSHPDISFNLINKGKQSIKSYGTGNLKDSIRCVYNKTISENLINFESHKDIISVYGFIGKPEISRKSRTNQSIFVNKRYVKSKFITAAVENAFKSFLTVNSYPFFVIFIDIFPEYIDVNVHPTKSEVKFKDERAMFKTIFDAVHEAIKGELKESFTNFFNKEDINIYDSEKSITEPIKLEKEEVQIPIDLNSNNKIDIFGNNINKLPNNTELLKNIGIKEKNTLENNNDFYTSKQNEIYYANKNDECLNSCNKDNYSKIEKSLQKDNKNPDILYLNEHNRNSSPINIKENKSNNFYVDMKIIGQFNNTYILIEKDKELYIIDQHAAHEKVLFEKFKCEIEKGYVISQILLSPVVIELSEDEFNIYEENKDIFKNSGFSVETFGEYTINIKEVPLILGKPNVENLFMDILYNLKNMKSKETSTIKYNAIATLACKSAVKANDNLKEEEIKKLIEDMLILNNPYTCPHGRPTMIKFTLKDLEKKFKRIQ.

It belongs to the DNA mismatch repair MutL/HexB family.

Its function is as follows. This protein is involved in the repair of mismatches in DNA. It is required for dam-dependent methyl-directed DNA mismatch repair. May act as a 'molecular matchmaker', a protein that promotes the formation of a stable complex between two or more DNA-binding proteins in an ATP-dependent manner without itself being part of a final effector complex. The polypeptide is DNA mismatch repair protein MutL (Clostridium botulinum (strain ATCC 19397 / Type A)).